We begin with the raw amino-acid sequence, 342 residues long: Ketol-acid reductoisomerase (NADP(+)) (342 aa).

The region spanning 2–182 is the KARI N-terminal Rossmann domain; that stretch reads AELFYDDDAD…GGLRAAGIKT (181 aa). NADP(+)-binding positions include 25–28, Arg-48, Ser-51, Ser-53, and 83–86; these read YGSQ and DQHQ. The active site involves His-108. Gly-134 is an NADP(+) binding site. Residues 183–328 enclose the KARI C-terminal knotted domain; that stretch reads TFTEETETDL…RELRKLFAWV (146 aa). Residues Asp-191, Glu-195, Glu-227, and Glu-231 each coordinate Mg(2+). Residue Ser-252 participates in substrate binding.

The protein belongs to the ketol-acid reductoisomerase family. The cofactor is Mg(2+).

It carries out the reaction (2R)-2,3-dihydroxy-3-methylbutanoate + NADP(+) = (2S)-2-acetolactate + NADPH + H(+). It catalyses the reaction (2R,3R)-2,3-dihydroxy-3-methylpentanoate + NADP(+) = (S)-2-ethyl-2-hydroxy-3-oxobutanoate + NADPH + H(+). The protein operates within amino-acid biosynthesis; L-isoleucine biosynthesis; L-isoleucine from 2-oxobutanoate: step 2/4. Its pathway is amino-acid biosynthesis; L-valine biosynthesis; L-valine from pyruvate: step 2/4. In terms of biological role, involved in the biosynthesis of branched-chain amino acids (BCAA). Catalyzes an alkyl-migration followed by a ketol-acid reduction of (S)-2-acetolactate (S2AL) to yield (R)-2,3-dihydroxy-isovalerate. In the isomerase reaction, S2AL is rearranged via a Mg-dependent methyl migration to produce 3-hydroxy-3-methyl-2-ketobutyrate (HMKB). In the reductase reaction, this 2-ketoacid undergoes a metal-dependent reduction by NADPH to yield (R)-2,3-dihydroxy-isovalerate. The protein is Ketol-acid reductoisomerase (NADP(+)) of Beutenbergia cavernae (strain ATCC BAA-8 / DSM 12333 / CCUG 43141 / JCM 11478 / NBRC 16432 / NCIMB 13614 / HKI 0122).